A 333-amino-acid chain; its full sequence is tRNA N6-adenosine threonylcarbamoyltransferase (333 aa).

Positions 111 and 115 each coordinate Fe cation. Residues 134 to 138 (LVSGG), Asp167, Gly180, and Asn272 contribute to the substrate site. Asp300 lines the Fe cation pocket.

The protein belongs to the KAE1 / TsaD family. Fe(2+) serves as cofactor.

Its subcellular location is the cytoplasm. It carries out the reaction L-threonylcarbamoyladenylate + adenosine(37) in tRNA = N(6)-L-threonylcarbamoyladenosine(37) in tRNA + AMP + H(+). Its function is as follows. Required for the formation of a threonylcarbamoyl group on adenosine at position 37 (t(6)A37) in tRNAs that read codons beginning with adenine. Is involved in the transfer of the threonylcarbamoyl moiety of threonylcarbamoyl-AMP (TC-AMP) to the N6 group of A37, together with TsaE and TsaB. TsaD likely plays a direct catalytic role in this reaction. The chain is tRNA N6-adenosine threonylcarbamoyltransferase from Hamiltonella defensa subsp. Acyrthosiphon pisum (strain 5AT).